The primary structure comprises 505 residues: Lysine--tRNA ligase (505 aa).

Mg(2+) is bound by residues Glu415 and Glu422.

Belongs to the class-II aminoacyl-tRNA synthetase family. In terms of assembly, homodimer. It depends on Mg(2+) as a cofactor.

Its subcellular location is the cytoplasm. It carries out the reaction tRNA(Lys) + L-lysine + ATP = L-lysyl-tRNA(Lys) + AMP + diphosphate. The sequence is that of Lysine--tRNA ligase from Yersinia pseudotuberculosis serotype O:1b (strain IP 31758).